The following is a 495-amino-acid chain: PXA domain protein 1 (495 aa).

Positions 1–174 (MAKLSSLLNP…KFIIYLSKAI (174 aa)) constitute a PXA domain. Helical transmembrane passes span 7 to 27 (LLNP…YSGI) and 235 to 255 (WFFF…FVAE). 2 stretches are compositionally biased toward polar residues: residues 402–419 (AVSS…QRSF) and 427–436 (DSQTPSENSA). Positions 402–436 (AVSSPTKANTNKSHQRSFSIPKATKDSQTPSENSA) are disordered. Residues 446 to 466 (AYSQIPVIPFFLPSDKLIMLV) traverse the membrane as a helical segment.

The protein localises to the endosome membrane. Required for required for normal vacuolar morphology and for vacuolar protein transport. Also required for endosome-to-Golgi protein transport. The sequence is that of PXA domain protein 1 (pxa1) from Schizosaccharomyces pombe (strain 972 / ATCC 24843) (Fission yeast).